A 339-amino-acid polypeptide reads, in one-letter code: UDP-N-acetylglucosamine--N-acetylmuramyl-(pentapeptide) pyrophosphoryl-undecaprenol N-acetylglucosamine transferase (339 aa).

UDP-N-acetyl-alpha-D-glucosamine-binding positions include 11 to 13, Asn-127, Arg-170, Ser-188, Ile-235, and Gln-280; that span reads TGG.

The protein belongs to the glycosyltransferase 28 family. MurG subfamily.

It localises to the cell inner membrane. It carries out the reaction di-trans,octa-cis-undecaprenyl diphospho-N-acetyl-alpha-D-muramoyl-L-alanyl-D-glutamyl-meso-2,6-diaminopimeloyl-D-alanyl-D-alanine + UDP-N-acetyl-alpha-D-glucosamine = di-trans,octa-cis-undecaprenyl diphospho-[N-acetyl-alpha-D-glucosaminyl-(1-&gt;4)]-N-acetyl-alpha-D-muramoyl-L-alanyl-D-glutamyl-meso-2,6-diaminopimeloyl-D-alanyl-D-alanine + UDP + H(+). It functions in the pathway cell wall biogenesis; peptidoglycan biosynthesis. In terms of biological role, cell wall formation. Catalyzes the transfer of a GlcNAc subunit on undecaprenyl-pyrophosphoryl-MurNAc-pentapeptide (lipid intermediate I) to form undecaprenyl-pyrophosphoryl-MurNAc-(pentapeptide)GlcNAc (lipid intermediate II). The chain is UDP-N-acetylglucosamine--N-acetylmuramyl-(pentapeptide) pyrophosphoryl-undecaprenol N-acetylglucosamine transferase from Thermotoga sp. (strain RQ2).